The primary structure comprises 472 residues: E3 ubiquitin-protein ligase MYLIP-A (472 aa).

An FERM domain is found at 1-279 (MLCHVTRPDA…ETHAFYRCDT (279 aa)). The RING-type zinc-finger motif lies at 384 to 419 (CMLCCEEEIDAAFCPCGHMVCCQNCAAQLQSCPVCR).

As to quaternary structure, interacts with anxa5. As to expression, ubiquitous.

It localises to the cytoplasm. It is found in the cytosol. It catalyses the reaction S-ubiquitinyl-[E2 ubiquitin-conjugating enzyme]-L-cysteine + [acceptor protein]-L-lysine = [E2 ubiquitin-conjugating enzyme]-L-cysteine + N(6)-ubiquitinyl-[acceptor protein]-L-lysine.. It functions in the pathway protein modification; protein ubiquitination. E3 ubiquitin-protein ligase that mediates ubiquitination and subsequent proteasomal degradation of myosin regulatory light chain (MRLC). Regulates cell movements during gastrulation by acting downstream of fz7 to antagonize the frizzled-signaling pathway. The protein is E3 ubiquitin-protein ligase MYLIP-A (mylipa) of Danio rerio (Zebrafish).